Reading from the N-terminus, the 402-residue chain is O-glucosyltransferase rumi homolog (402 aa).

The N-terminal stretch at 1–20 (MPYLEIVLALLVLSFQLGHS) is a signal peptide. 4 disulfide bridges follow: cysteine 67-cysteine 74, cysteine 72-cysteine 375, cysteine 118-cysteine 124, and cysteine 279-cysteine 302. Asparagine 71 carries an N-linked (GlcNAc...) asparagine glycan. The Proton donor/acceptor role is filled by aspartate 149. Residues 189–194 (AISLYP) form an interaction with the consensus sequence C-X-S-X-[PA]-C in peptide substrates region. UDP-alpha-D-glucose-binding positions include 226-230 (RGSRT), arginine 234, 273-275 (VRL), and 291-295 (AASFR).

This sequence belongs to the glycosyltransferase 90 family.

The protein resides in the endoplasmic reticulum lumen. It localises to the secreted. It participates in protein modification; protein glycosylation. In terms of biological role, protein O-glucosyltransferase. Catalyzes the reaction that attaches glucose through an O-glycosidic linkage to a conserved serine residue found in the consensus sequence C-X-S-X-[PA]-C in epidermal growth factor-like repeats. Regulates Notch signaling by glucosylating Notch in the ER, glucosylation is required for the correct folding and cleavage of Notch. The chain is O-glucosyltransferase rumi homolog from Aedes aegypti (Yellowfever mosquito).